A 589-amino-acid polypeptide reads, in one-letter code: Phenylalanine--tRNA ligase beta subunit (589 aa).

In terms of domain architecture, B5 spans 302-379 (LPYRKEMVRA…IAYGYNNIQM (78 aa)). D357, D363, E366, and D367 together coordinate Mg(2+).

This sequence belongs to the phenylalanyl-tRNA synthetase beta subunit family. Type 2 subfamily. As to quaternary structure, heterotetramer; dimer of two heterodimers formed by FARSA and FARSB. Mg(2+) serves as cofactor.

It is found in the cytoplasm. The catalysed reaction is tRNA(Phe) + L-phenylalanine + ATP = L-phenylalanyl-tRNA(Phe) + AMP + diphosphate + H(+). The polypeptide is Phenylalanine--tRNA ligase beta subunit (Farsb) (Mus musculus (Mouse)).